Here is a 179-residue protein sequence, read N- to C-terminus: Large ribosomal subunit protein uL6 (179 aa).

Belongs to the universal ribosomal protein uL6 family. In terms of assembly, part of the 50S ribosomal subunit.

This protein binds to the 23S rRNA, and is important in its secondary structure. It is located near the subunit interface in the base of the L7/L12 stalk, and near the tRNA binding site of the peptidyltransferase center. The polypeptide is Large ribosomal subunit protein uL6 (Mycobacterium tuberculosis (strain ATCC 25618 / H37Rv)).